Reading from the N-terminus, the 149-residue chain is Nucleoside diphosphate kinase (149 aa).

ATP is bound by residues K9, F57, R85, T91, R102, and N112. Residue H115 is the Pros-phosphohistidine intermediate of the active site.

The protein belongs to the NDK family. Homotetramer. The cofactor is Mg(2+).

It is found in the cytoplasm. The catalysed reaction is a 2'-deoxyribonucleoside 5'-diphosphate + ATP = a 2'-deoxyribonucleoside 5'-triphosphate + ADP. The enzyme catalyses a ribonucleoside 5'-diphosphate + ATP = a ribonucleoside 5'-triphosphate + ADP. Major role in the synthesis of nucleoside triphosphates other than ATP. The ATP gamma phosphate is transferred to the NDP beta phosphate via a ping-pong mechanism, using a phosphorylated active-site intermediate. The chain is Nucleoside diphosphate kinase from Staphylococcus saprophyticus subsp. saprophyticus (strain ATCC 15305 / DSM 20229 / NCIMB 8711 / NCTC 7292 / S-41).